Here is a 128-residue protein sequence, read N- to C-terminus: Ribonuclease pancreatic (128 aa).

The interval 1–23 (AESSAMKFQRQHVDSEGSSSSNA) is disordered. Residues Lys-7 and Arg-10 each coordinate substrate. Catalysis depends on His-12, which acts as the Proton acceptor. Cystine bridges form between Cys-26–Cys-84, Cys-40–Cys-95, Cys-58–Cys-110, and Cys-65–Cys-72. Residues 41 to 45 (KPVNT), Lys-66, and Arg-85 each bind substrate. The Proton donor role is filled by His-119.

It belongs to the pancreatic ribonuclease family. Monomer. Interacts with and forms tight 1:1 complexes with RNH1. Dimerization of two such complexes may occur. Interaction with RNH1 inhibits this protein. As to expression, pancreas.

It is found in the secreted. It carries out the reaction an [RNA] containing cytidine + H2O = an [RNA]-3'-cytidine-3'-phosphate + a 5'-hydroxy-ribonucleotide-3'-[RNA].. The catalysed reaction is an [RNA] containing uridine + H2O = an [RNA]-3'-uridine-3'-phosphate + a 5'-hydroxy-ribonucleotide-3'-[RNA].. Endonuclease that catalyzes the cleavage of RNA on the 3' side of pyrimidine nucleotides. Acts on single-stranded and double-stranded RNA. The protein is Ribonuclease pancreatic (RNASE1) of Hydrochoerus hydrochaeris (Capybara).